Consider the following 132-residue polypeptide: Glycine cleavage system H protein (132 aa).

The Lipoyl-binding domain occupies 24-106 (LVRIGISAFA…HGEGWLLVVR (83 aa)). Residue Lys-65 is modified to N6-lipoyllysine.

The protein belongs to the GcvH family. The glycine cleavage system is composed of four proteins: P, T, L and H. It depends on (R)-lipoate as a cofactor.

Functionally, the glycine cleavage system catalyzes the degradation of glycine. The H protein shuttles the methylamine group of glycine from the P protein to the T protein. This is Glycine cleavage system H protein from Prochlorococcus marinus (strain MIT 9313).